Here is a 314-residue protein sequence, read N- to C-terminus: Oxidoreductase NAD-binding domain-containing protein 1 (314 aa).

Residues 1–18 (MALVAGSAAYQVLRGVTG) form the signal peptide. The FAD-binding FR-type domain maps to 63–166 (EIISPAKVCG…VGGEFCFDPQ (104 aa)). 180–185 (GVGINP) contributes to the NAD(+) binding site.

The protein is Oxidoreductase NAD-binding domain-containing protein 1 (oxnad1) of Xenopus laevis (African clawed frog).